Reading from the N-terminus, the 675-residue chain is DNA ligase (675 aa).

NAD(+) contacts are provided by residues 34–38 (DYAFD), 83–84 (SL), and Glu117. Lys119 (N6-AMP-lysine intermediate) is an active-site residue. Arg140, Glu184, Lys297, and Lys321 together coordinate NAD(+). Residues Cys415, Cys418, Cys433, and Cys439 each coordinate Zn(2+). A BRCT domain is found at 598 to 675 (LVNRNFEGMK…GEEEFEAMLF (78 aa)).

It belongs to the NAD-dependent DNA ligase family. LigA subfamily. It depends on Mg(2+) as a cofactor. Mn(2+) is required as a cofactor.

The enzyme catalyses NAD(+) + (deoxyribonucleotide)n-3'-hydroxyl + 5'-phospho-(deoxyribonucleotide)m = (deoxyribonucleotide)n+m + AMP + beta-nicotinamide D-nucleotide.. Functionally, DNA ligase that catalyzes the formation of phosphodiester linkages between 5'-phosphoryl and 3'-hydroxyl groups in double-stranded DNA using NAD as a coenzyme and as the energy source for the reaction. It is essential for DNA replication and repair of damaged DNA. The polypeptide is DNA ligase (Prosthecochloris aestuarii (strain DSM 271 / SK 413)).